The chain runs to 615 residues: UvrABC system protein C (615 aa).

A GIY-YIG domain is found at 12–91 (EKPGVYIMKD…IKKYKPKYNV (80 aa)). Positions 203-238 (DWLIQKLKEDMKKAAEELRFEEAARIRDQIFAIERT) constitute a UVR domain.

This sequence belongs to the UvrC family. Interacts with UvrB in an incision complex.

The protein localises to the cytoplasm. Functionally, the UvrABC repair system catalyzes the recognition and processing of DNA lesions. UvrC both incises the 5' and 3' sides of the lesion. The N-terminal half is responsible for the 3' incision and the C-terminal half is responsible for the 5' incision. The polypeptide is UvrABC system protein C (Thermoanaerobacter pseudethanolicus (strain ATCC 33223 / 39E) (Clostridium thermohydrosulfuricum)).